Reading from the N-terminus, the 120-residue chain is Large ribosomal subunit protein uL18 (120 aa).

Belongs to the universal ribosomal protein uL18 family. In terms of assembly, part of the 50S ribosomal subunit; part of the 5S rRNA/L5/L18/L25 subcomplex. Contacts the 5S and 23S rRNAs.

In terms of biological role, this is one of the proteins that bind and probably mediate the attachment of the 5S RNA into the large ribosomal subunit, where it forms part of the central protuberance. The sequence is that of Large ribosomal subunit protein uL18 from Clostridium botulinum (strain Eklund 17B / Type B).